Here is a 100-residue protein sequence, read N- to C-terminus: UPF0213 protein CKO_04549 (100 aa).

Residues 2-77 form the GIY-YIG domain; that stretch reads TPWYLYLIRT…KRLTKRQKER (76 aa).

This sequence belongs to the UPF0213 family.

This is UPF0213 protein CKO_04549 from Citrobacter koseri (strain ATCC BAA-895 / CDC 4225-83 / SGSC4696).